A 321-amino-acid polypeptide reads, in one-letter code: Lipoyl synthase (321 aa).

[4Fe-4S] cluster contacts are provided by Cys68, Cys73, Cys79, Cys94, Cys98, Cys101, and Ser308. The region spanning 80 to 297 (FNHGTATFMI…KVIALELGFT (218 aa)) is the Radical SAM core domain.

The protein belongs to the radical SAM superfamily. Lipoyl synthase family. It depends on [4Fe-4S] cluster as a cofactor.

It localises to the cytoplasm. The catalysed reaction is [[Fe-S] cluster scaffold protein carrying a second [4Fe-4S](2+) cluster] + N(6)-octanoyl-L-lysyl-[protein] + 2 oxidized [2Fe-2S]-[ferredoxin] + 2 S-adenosyl-L-methionine + 4 H(+) = [[Fe-S] cluster scaffold protein] + N(6)-[(R)-dihydrolipoyl]-L-lysyl-[protein] + 4 Fe(3+) + 2 hydrogen sulfide + 2 5'-deoxyadenosine + 2 L-methionine + 2 reduced [2Fe-2S]-[ferredoxin]. It functions in the pathway protein modification; protein lipoylation via endogenous pathway; protein N(6)-(lipoyl)lysine from octanoyl-[acyl-carrier-protein]: step 2/2. Catalyzes the radical-mediated insertion of two sulfur atoms into the C-6 and C-8 positions of the octanoyl moiety bound to the lipoyl domains of lipoate-dependent enzymes, thereby converting the octanoylated domains into lipoylated derivatives. The polypeptide is Lipoyl synthase (Aliivibrio salmonicida (strain LFI1238) (Vibrio salmonicida (strain LFI1238))).